The sequence spans 943 residues: Translation initiation factor IF-2 (943 aa).

The segment covering Val-99 to Gln-113 has biased composition (low complexity). The segment at Val-99–Ala-354 is disordered. The segment covering Asp-117 to Lys-141 has biased composition (basic and acidic residues). Residues Ala-145 to Thr-172 show a composition bias toward low complexity. Residues Lys-173–Lys-197 show a composition bias toward basic and acidic residues. The segment covering Lys-200 to Glu-215 has biased composition (low complexity). The segment covering Gln-216 to Met-250 has biased composition (basic and acidic residues). The span at Lys-251–Ala-264 shows a compositional bias: low complexity. 2 stretches are compositionally biased toward basic and acidic residues: residues Ala-295–Gln-308 and Gly-319–Arg-335. Residues Pro-443 to Thr-612 enclose the tr-type G domain. The interval Gly-452 to Thr-459 is G1. Gly-452 to Thr-459 is a binding site for GTP. The tract at residues Gly-477–His-481 is G2. Residues Asp-498–Gly-501 form a G3 region. Residues Asp-498–His-502 and Asn-552–Asp-555 contribute to the GTP site. The G4 stretch occupies residues Asn-552 to Asp-555. The G5 stretch occupies residues Ser-588–Lys-590.

It belongs to the TRAFAC class translation factor GTPase superfamily. Classic translation factor GTPase family. IF-2 subfamily.

It is found in the cytoplasm. One of the essential components for the initiation of protein synthesis. Protects formylmethionyl-tRNA from spontaneous hydrolysis and promotes its binding to the 30S ribosomal subunits. Also involved in the hydrolysis of GTP during the formation of the 70S ribosomal complex. This chain is Translation initiation factor IF-2, found in Neisseria gonorrhoeae (strain ATCC 700825 / FA 1090).